The chain runs to 468 residues: Heparan-sulfate 6-O-sulfotransferase 2 (468 aa).

Residues 1–9 (MDGKSNYSR) are Cytoplasmic-facing. Residues 10–30 (LLIALLMILFFGGIVLQYICS) traverse the membrane as a helical; Signal-anchor for type II membrane protein segment. The Lumenal portion of the chain corresponds to 31 to 468 (TSDWQLLHLA…DYLENVEQWR (438 aa)). The N-linked (GlcNAc...) asparagine glycan is linked to Asn79. A 3'-phosphoadenylyl sulfate-binding site is contributed by 103 to 111 (HIQKTGGTT). Substrate contacts are provided by residues 133–134 (KK), Arg150, Trp155, and His160. The active-site Proton acceptor is His160. 2 residues coordinate 3'-phosphoadenylyl sulfate: Arg197 and Ser205. Residues His209 and Trp216 each contribute to the substrate site. N-linked (GlcNAc...) asparagine glycosylation occurs at Asn276. 329–331 (TQL) is a 3'-phosphoadenylyl sulfate binding site. Asn332 carries N-linked (GlcNAc...) asparagine glycosylation. Residue 335 to 336 (RA) participates in 3'-phosphoadenylyl sulfate binding. The interval 409–447 (FKPTKEPPMTEQSPAFAEEKQADAERTLESETEGQVEEN) is disordered. The segment covering 425-437 (AEEKQADAERTLE) has biased composition (basic and acidic residues). Acidic residues predominate over residues 438–447 (SETEGQVEEN).

Belongs to the sulfotransferase 6 family. Expressed ubiquitously during gastrulation. During early somitogenesis, strong expression in head and presumptive brain. During mid-somitogenesis, strong expression in eye, hindbrain and somitic boundaries and weak expression in tail bud. During late somitogenesis, strong expression in eye, hindbrain, branchial arch primordia, spinal cord and ventral medial somites. At 24 hours post-fertilization (hpf), strong expression throughout the head, with expression receeding from the trunk spinal cord, ventral medial somites and somitic boundaries; expressed in cells surrounding vascular structures of the dorsal aorta and caudal vein in the tail. At 36 hpf, expressed in lens, optic stalk, hindbrain and pectoral fin. At 48 hpf, expressed in eye, brain, otic vesicle and branchial arches.

Its subcellular location is the membrane. The catalysed reaction is alpha-D-glucosaminyl-[heparan sulfate](n) + 3'-phosphoadenylyl sulfate = 6-sulfo-alpha-D-glucosaminyl-[heparan sulfate](n) + adenosine 3',5'-bisphosphate + H(+). Its function is as follows. 6-O-sulfation enzyme which catalyzes the transfer of sulfate from 3'-phosphoadenosine 5'-phosphosulfate (PAPS) to position 6 of the N-sulfoglucosamine residue (GlcNS) of heparan sulfate. Required for muscle development and angiogenesis. The protein is Heparan-sulfate 6-O-sulfotransferase 2 (hs6st2) of Danio rerio (Zebrafish).